A 206-amino-acid polypeptide reads, in one-letter code: N-(5'-phosphoribosyl)anthranilate isomerase (206 aa).

This sequence belongs to the TrpF family.

It carries out the reaction N-(5-phospho-beta-D-ribosyl)anthranilate = 1-(2-carboxyphenylamino)-1-deoxy-D-ribulose 5-phosphate. It participates in amino-acid biosynthesis; L-tryptophan biosynthesis; L-tryptophan from chorismate: step 3/5. This is N-(5'-phosphoribosyl)anthranilate isomerase from Chlamydia caviae (strain ATCC VR-813 / DSM 19441 / 03DC25 / GPIC) (Chlamydophila caviae).